Consider the following 466-residue polypeptide: MTGKIVQVLGPVIDVDFTDYLPEINEALETTFMFEGKEQKLVLEVAAQLGDNRVRTIAMDMSEGVVRGQEVKATGDSIQVPVGEEVLGRIFNVIGEAIDEAGPVEAKTHWSIHRDPPPFEDQSTKTEVFETGIKVVDLLAPYSKGGKVGLFGGAGVGKTVIIMELINNVAMKHSGYSVFAGVGERTREGNDLYYEMKESNVLDKVALCYGQMSEPPGARNRIALTGLTMAEYFRDEMGLDVLMFIDNIFRFAQSGSEMSALLGRIPSAVGYQPTLSREMGALQERITSTTKGSITSVQAVYVPADDLTDPAPASVFAHLDATTVLNRSIAEKGIYPAVDPLDSTSRMLDPQIIGEEHYNVARGVQQILQKYKDLQDIIAILGMDELSEDDKLVVERARKIEKYLSQPFHVAEVFTGSPGVYVTLEDTIEGFKGLLEGKYDDMNEAAFYMVGNMAEAIAKNDKINAK.

Position 152–159 (152–159 (GGAGVGKT)) interacts with ATP.

The protein belongs to the ATPase alpha/beta chains family. As to quaternary structure, F-type ATPases have 2 components, CF(1) - the catalytic core - and CF(0) - the membrane proton channel. CF(1) has five subunits: alpha(3), beta(3), gamma(1), delta(1), epsilon(1). CF(0) has three main subunits: a(1), b(2) and c(9-12). The alpha and beta chains form an alternating ring which encloses part of the gamma chain. CF(1) is attached to CF(0) by a central stalk formed by the gamma and epsilon chains, while a peripheral stalk is formed by the delta and b chains.

The protein localises to the cell inner membrane. It carries out the reaction ATP + H2O + 4 H(+)(in) = ADP + phosphate + 5 H(+)(out). Functionally, produces ATP from ADP in the presence of a proton gradient across the membrane. The catalytic sites are hosted primarily by the beta subunits. This chain is ATP synthase subunit beta, found in Sulfurovum sp. (strain NBC37-1).